The chain runs to 225 residues: uncharacterized protein (225 aa).

The region spanning 166–214 (LNSDVIKDKILAIIENVGEITYEELAEKINIPEEDLEKYLSELKESGDI) is the PCI domain.

This is an uncharacterized protein from Methanocaldococcus jannaschii (strain ATCC 43067 / DSM 2661 / JAL-1 / JCM 10045 / NBRC 100440) (Methanococcus jannaschii).